We begin with the raw amino-acid sequence, 66 residues long: Large ribosomal subunit protein bL35 (66 aa).

Composition is skewed to basic residues over residues 1–16 (MPKM…RVKR) and 38–49 (TKQKRQLRKARL). Positions 1–49 (MPKMKTHRGAAKRVKRTASGQLKRSRAFTSHLFANKSTKQKRQLRKARL) are disordered.

It belongs to the bacterial ribosomal protein bL35 family.

In Staphylococcus aureus (strain MSSA476), this protein is Large ribosomal subunit protein bL35.